The primary structure comprises 67 residues: Conotoxin ArMLCL-012 (67 aa).

Positions 1–19 are cleaved as a signal peptide; the sequence is MLCLPVFIILLLLASPAAS. Residues 20–45 constitute a propeptide that is removed on maturation; it reads NPLEKRIQSDLIRAALEDADTKNDPR. Residue Cys-64 is modified to Cysteine amide.

This sequence belongs to the conotoxin T superfamily. In terms of processing, contains 2 disulfide bonds that can be either 'C1-C3, C2-C4' or 'C1-C4, C2-C3', since these disulfide connectivities have been observed for conotoxins with cysteine framework V (for examples, see AC P0DQQ7 and AC P81755). Expressed by the venom duct.

The protein resides in the secreted. This is Conotoxin ArMLCL-012 from Conus arenatus (Sand-dusted cone).